We begin with the raw amino-acid sequence, 348 residues long: UDP-3-O-acylglucosamine N-acyltransferase (348 aa).

The Proton acceptor role is filled by H257.

It belongs to the transferase hexapeptide repeat family. LpxD subfamily. Homotrimer.

It catalyses the reaction a UDP-3-O-[(3R)-3-hydroxyacyl]-alpha-D-glucosamine + a (3R)-hydroxyacyl-[ACP] = a UDP-2-N,3-O-bis[(3R)-3-hydroxyacyl]-alpha-D-glucosamine + holo-[ACP] + H(+). Its pathway is bacterial outer membrane biogenesis; LPS lipid A biosynthesis. Functionally, catalyzes the N-acylation of UDP-3-O-acylglucosamine using 3-hydroxyacyl-ACP as the acyl donor. Is involved in the biosynthesis of lipid A, a phosphorylated glycolipid that anchors the lipopolysaccharide to the outer membrane of the cell. The protein is UDP-3-O-acylglucosamine N-acyltransferase of Bartonella quintana (strain Toulouse) (Rochalimaea quintana).